The primary structure comprises 103 residues: MMSYIALAACIGLAMAANVDHDVKSAVNEVTTTKDGDTYCPVPLVGTKCGTSSIFHYWKCCGELNKECCFNLQTWVWVTLALFGVIFIASFVISLVRCICCRK.

The signal sequence occupies residues 1-16 (MMSYIALAACIGLAMA). The Extracellular portion of the chain corresponds to 17–75 (ANVDHDVKSAVNEVTTTKDGDTYCPVPLVGTKCGTSSIFHYWKCCGELNKECCFNLQTW). A helical transmembrane segment spans residues 76–96 (VWVTLALFGVIFIASFVISLV). The Cytoplasmic segment spans residues 97–103 (RCICCRK).

As to expression, expressed in a subset of neurons and in body wall muscles. In the nervous system, expressed specifically in cholinergic motor neurons of the ventral nerve cord, a subset of cholinergic head neurons, anterior sublateral neurons, and body sublateral neurons (at protein level).

It localises to the cell membrane. It is found in the perikaryon. The protein localises to the cell projection. The protein resides in the synapse. Its subcellular location is the cytoplasmic vesicle. It localises to the secretory vesicle. It is found in the synaptic vesicle. In terms of biological role, may be involved in trafficking or stabilization of the vesicular acetylcholine transporter unc-17. In Caenorhabditis elegans, this protein is Protein SUP-1.